The sequence spans 118 residues: Large ribosomal subunit protein uL18 (118 aa).

The protein belongs to the universal ribosomal protein uL18 family. Part of the 50S ribosomal subunit; part of the 5S rRNA/L5/L18/L25 subcomplex. Contacts the 5S and 23S rRNAs.

This is one of the proteins that bind and probably mediate the attachment of the 5S RNA into the large ribosomal subunit, where it forms part of the central protuberance. This chain is Large ribosomal subunit protein uL18, found in Campylobacter jejuni subsp. jejuni serotype O:6 (strain 81116 / NCTC 11828).